A 614-amino-acid chain; its full sequence is MNSLRPELLELTPQALTALSNAGFVKRSLKELENGNVPEISHENDALIATFSDGVRTQLANGQALKEAQCSCGANGMCRHRVMLVLSYQRLCATTQSTEKEEEWDPAIWLEELATLPDATRKRAQALVAKGITIELFCAPGEIPSARLPMSDVRFYSRSSIRFARCDCIEGTLCEHVVLAVQAFVEAKAQQAEFNHLIWQMRSEHVTSSDDPFASEEGNACRQYVQQLSQTLWLGGISQPLIHYEAAFNRALQAAETCNWRWVSESLRQLRASVDAFHARASHYNAGECLHQLAALNSRLNCAQEMARRDSIGEVPPVPWRTVVGSGIAGEAKLDHLRLVSLGMRCWQDIEHYGLRIWFTDPDTGSILHLSRSWPRSEQENSPAATRRLFSFQAGALAGGQIVSQAAKRSADGELLLATRNRLSSVVPLSPDAWQMLSAPLRQPGIVALREYLRQRPPACIRPLNQVDNLFILPVAECISLGWDSSRQTLDAQVISGEGEDNVLTLSLPASASAPYAVERMAALLQQTDDPVCLVSGFVSFVEGQLTLEPRVMMTKTRAWALDAETTPVAPLPSASVLPVPSTAHQLLIRCQALLIQLLHNGWRYQEQSAIGQA.

SWIM-type zinc fingers lie at residues 55-89 (VRTQ…LSYQ) and 151-185 (SDVR…QAFV).

This Escherichia coli (strain K12) protein is Protein YehQ (yehQ).